A 147-amino-acid polypeptide reads, in one-letter code: MVEWTDKERSIISDIFSHLDYEDIGPKALSRCLIVYPWTQRHFSGFGNLYNAESIIGNANVAAHGIKVLHGLDRGLKNMDNIEATYADLSTLHSEKLHVDPDNFKLLADCITIVLAAKMGQAFTAEIQGAFQKFLAVVVSALGKQYH.

The Globin domain occupies 3–147; it reads EWTDKERSII…VVSALGKQYH (145 aa). Residues His-64 and His-93 each contribute to the heme b site.

The protein belongs to the globin family. In terms of assembly, heterotetramer of two alpha chains and two beta chains. As to expression, red blood cells.

Functionally, involved in oxygen transport from gills to the various peripheral tissues. In Pagothenia borchgrevinki (Bald rockcod), this protein is Hemoglobin subunit beta-1 (hbb1).